Here is a 51-residue protein sequence, read N- to C-terminus: ATP synthase F(1) complex subunit epsilon, mitochondrial (51 aa).

An N6-acetyllysine; alternate mark is found at lysine 21, lysine 32, and lysine 37. An N6-succinyllysine; alternate mark is found at lysine 21, lysine 32, and lysine 37. At lysine 44 the chain carries N6-acetyllysine.

The protein belongs to the eukaryotic ATPase epsilon family. As to quaternary structure, component of the ATP synthase complex composed at least of ATP5F1A/subunit alpha, ATP5F1B/subunit beta, ATP5MC1/subunit c (homooctomer), MT-ATP6/subunit a, MT-ATP8/subunit 8, ATP5ME/subunit e, ATP5MF/subunit f, ATP5MG/subunit g, ATP5MK/subunit k, ATP5MJ/subunit j, ATP5F1C/subunit gamma, ATP5F1D/subunit delta, ATP5F1E/subunit epsilon, ATP5PF/subunit F6, ATP5PB/subunit b, ATP5PD/subunit d, ATP5PO/subunit OSCP. ATP synthase complex consists of a soluble F(1) head domain (subunits alpha(3) and beta(3)) - the catalytic core - and a membrane F(0) domain - the membrane proton channel (subunits c, a, 8, e, f, g, k and j). These two domains are linked by a central stalk (subunits gamma, delta, and epsilon) rotating inside the F1 region and a stationary peripheral stalk (subunits F6, b, d, and OSCP).

It localises to the mitochondrion. The protein localises to the mitochondrion inner membrane. Its function is as follows. Subunit epsilon, of the mitochondrial membrane ATP synthase complex (F(1)F(0) ATP synthase or Complex V) that produces ATP from ADP in the presence of a proton gradient across the membrane which is generated by electron transport complexes of the respiratory chain. ATP synthase complex consist of a soluble F(1) head domain - the catalytic core - and a membrane F(1) domain - the membrane proton channel. These two domains are linked by a central stalk rotating inside the F(1) region and a stationary peripheral stalk. During catalysis, ATP synthesis in the catalytic domain of F(1) is coupled via a rotary mechanism of the central stalk subunits to proton translocation. In vivo, can only synthesize ATP although its ATP hydrolase activity can be activated artificially in vitro. May be essential for the assembly of F(1) and may play an important role in the incorporation of the hydrophobic subunit c into the F(1)-c oligomer rotor of the mitochondrial ATP synthase complex. The chain is ATP synthase F(1) complex subunit epsilon, mitochondrial from Bos taurus (Bovine).